A 315-amino-acid polypeptide reads, in one-letter code: Aspartate carbamoyltransferase catalytic subunit (315 aa).

Carbamoyl phosphate-binding residues include arginine 54 and threonine 55. Lysine 82 is a binding site for L-aspartate. 3 residues coordinate carbamoyl phosphate: arginine 104, histidine 134, and glutamine 137. Arginine 174 and arginine 229 together coordinate L-aspartate. Residues glycine 270 and proline 271 each contribute to the carbamoyl phosphate site.

Belongs to the aspartate/ornithine carbamoyltransferase superfamily. ATCase family. Heterododecamer (2C3:3R2) of six catalytic PyrB chains organized as two trimers (C3), and six regulatory PyrI chains organized as three dimers (R2).

It catalyses the reaction carbamoyl phosphate + L-aspartate = N-carbamoyl-L-aspartate + phosphate + H(+). Its pathway is pyrimidine metabolism; UMP biosynthesis via de novo pathway; (S)-dihydroorotate from bicarbonate: step 2/3. Its function is as follows. Catalyzes the condensation of carbamoyl phosphate and aspartate to form carbamoyl aspartate and inorganic phosphate, the committed step in the de novo pyrimidine nucleotide biosynthesis pathway. The chain is Aspartate carbamoyltransferase catalytic subunit from Leifsonia xyli subsp. xyli (strain CTCB07).